The sequence spans 200 residues: 3-isopropylmalate dehydratase small subunit (200 aa).

This sequence belongs to the LeuD family. LeuD type 1 subfamily. As to quaternary structure, heterodimer of LeuC and LeuD.

The enzyme catalyses (2R,3S)-3-isopropylmalate = (2S)-2-isopropylmalate. It participates in amino-acid biosynthesis; L-leucine biosynthesis; L-leucine from 3-methyl-2-oxobutanoate: step 2/4. Functionally, catalyzes the isomerization between 2-isopropylmalate and 3-isopropylmalate, via the formation of 2-isopropylmaleate. This chain is 3-isopropylmalate dehydratase small subunit, found in Actinobacillus pleuropneumoniae serotype 7 (strain AP76).